A 359-amino-acid polypeptide reads, in one-letter code: Molybdenum import ATP-binding protein ModC (359 aa).

Residues Met-1–Val-233 form the ABC transporter domain. Gly-32 to Thr-39 lines the ATP pocket. Residues Ala-289 to Ala-355 form the Mop domain.

The protein belongs to the ABC transporter superfamily. Molybdate importer (TC 3.A.1.8) family. As to quaternary structure, the complex is composed of two ATP-binding proteins (ModC), two transmembrane proteins (ModB) and a solute-binding protein (ModA).

It is found in the cell inner membrane. The catalysed reaction is molybdate(out) + ATP + H2O = molybdate(in) + ADP + phosphate + H(+). In terms of biological role, part of the ABC transporter complex ModABC involved in molybdenum import. Responsible for energy coupling to the transport system. This is Molybdenum import ATP-binding protein ModC from Brucella melitensis biotype 1 (strain ATCC 23456 / CCUG 17765 / NCTC 10094 / 16M).